Here is a 300-residue protein sequence, read N- to C-terminus: Ribosomal protein L11 methyltransferase (300 aa).

S-adenosyl-L-methionine contacts are provided by threonine 141, glycine 164, aspartate 186, and asparagine 233.

It belongs to the methyltransferase superfamily. PrmA family.

The protein resides in the cytoplasm. It carries out the reaction L-lysyl-[protein] + 3 S-adenosyl-L-methionine = N(6),N(6),N(6)-trimethyl-L-lysyl-[protein] + 3 S-adenosyl-L-homocysteine + 3 H(+). In terms of biological role, methylates ribosomal protein L11. In Synechocystis sp. (strain ATCC 27184 / PCC 6803 / Kazusa), this protein is Ribosomal protein L11 methyltransferase.